We begin with the raw amino-acid sequence, 137 residues long: Small ribosomal subunit protein uS12 (137 aa).

Disordered stretches follow at residues 1 to 22 and 37 to 57; these read MPTI…SKSP and KNPS…TPKK. Basic residues predominate over residues 9-19; it reads RKGRKSHKGKS. 3-methylthioaspartic acid is present on D102.

It belongs to the universal ribosomal protein uS12 family. Part of the 30S ribosomal subunit. Contacts proteins S8 and S17. May interact with IF1 in the 30S initiation complex.

Functionally, with S4 and S5 plays an important role in translational accuracy. Its function is as follows. Interacts with and stabilizes bases of the 16S rRNA that are involved in tRNA selection in the A site and with the mRNA backbone. Located at the interface of the 30S and 50S subunits, it traverses the body of the 30S subunit contacting proteins on the other side and probably holding the rRNA structure together. The combined cluster of proteins S8, S12 and S17 appears to hold together the shoulder and platform of the 30S subunit. The sequence is that of Small ribosomal subunit protein uS12 from Limosilactobacillus fermentum (strain NBRC 3956 / LMG 18251) (Lactobacillus fermentum).